The following is a 541-amino-acid chain: Atrial natriuretic peptide receptor 3 (541 aa).

A signal peptide spans methionine 1–glycine 26. The Extracellular portion of the chain corresponds to glycine 27–glutamate 481. Asparagine 86 carries an N-linked (GlcNAc...) (complex) asparagine glycan. 3 residues coordinate chloride: serine 106, valine 135, and cysteine 136. Cystine bridges form between cysteine 108-cysteine 136 and cysteine 213-cysteine 261. A glycan (N-linked (GlcNAc...) (high mannose) asparagine) is linked at asparagine 293. A glycan (N-linked (GlcNAc...) (complex) asparagine) is linked at asparagine 394. Residues serine 482–phenylalanine 504 traverse the membrane as a helical segment. Over arginine 505 to alanine 541 the chain is Cytoplasmic.

The protein belongs to the ANF receptor family. Homodimer; disulfide-linked. Dimers can also be formed through the C-terminal cysteine of isoform 2. Interacts with OSTN.

It is found in the cell membrane. Functionally, receptor for the natriuretic peptide hormones, binding with similar affinities atrial natriuretic peptide NPPA/ANP, brain natriuretic peptide NPPB/BNP, and C-type natriuretic peptide NPPC/CNP. May function as a clearance receptor for NPPA, NPPB and NPPC, regulating their local concentrations and effects. Acts as a regulator of osteoblast differentiation and bone growth by binding to its ligand osteocrin, thereby preventing binding between NPR3/NPR-C and natriuretic peptides, leading to increase cGMP production. This is Atrial natriuretic peptide receptor 3 (NPR3) from Homo sapiens (Human).